The chain runs to 186 residues: Ribosome-recycling factor (186 aa).

It belongs to the RRF family.

It is found in the cytoplasm. Functionally, responsible for the release of ribosomes from messenger RNA at the termination of protein biosynthesis. May increase the efficiency of translation by recycling ribosomes from one round of translation to another. The chain is Ribosome-recycling factor from Chelativorans sp. (strain BNC1).